Consider the following 52-residue polypeptide: Large ribosomal subunit protein bL33 (52 aa).

This sequence belongs to the bacterial ribosomal protein bL33 family.

The sequence is that of Large ribosomal subunit protein bL33 from Chlamydia abortus (strain DSM 27085 / S26/3) (Chlamydophila abortus).